A 170-amino-acid chain; its full sequence is Ribosome maturation factor RimM (170 aa).

Residues 95 to 168 form the PRC barrel domain; it reads EDAYYYHEIV…IIKVQLMEGM (74 aa).

The protein belongs to the RimM family. Binds ribosomal protein uS19.

Its subcellular location is the cytoplasm. In terms of biological role, an accessory protein needed during the final step in the assembly of 30S ribosomal subunit, possibly for assembly of the head region. Essential for efficient processing of 16S rRNA. May be needed both before and after RbfA during the maturation of 16S rRNA. It has affinity for free ribosomal 30S subunits but not for 70S ribosomes. The sequence is that of Ribosome maturation factor RimM from Oceanobacillus iheyensis (strain DSM 14371 / CIP 107618 / JCM 11309 / KCTC 3954 / HTE831).